The sequence spans 342 residues: Large ribosomal subunit protein uL3 (342 aa).

It belongs to the universal ribosomal protein uL3 family. Part of the 50S ribosomal subunit. Forms a cluster with proteins L14 and L24e.

Its function is as follows. One of the primary rRNA binding proteins, it binds directly near the 3'-end of the 23S rRNA, where it nucleates assembly of the 50S subunit. The polypeptide is Large ribosomal subunit protein uL3 (Pyrobaculum islandicum (strain DSM 4184 / JCM 9189 / GEO3)).